A 1150-amino-acid chain; its full sequence is Rho-type GTPase-activating protein 1 (1150 aa).

Positions 1 to 10 (MSQRDAKKDG) are enriched in basic and acidic residues. The tract at residues 1–78 (MSQRDAKKDG…AESRKALPNQ (78 aa)) is disordered. Over residues 40 to 62 (TTKNFPHSRHTSTVAGTEGGSSL) the composition is skewed to polar residues. 3 LIM zinc-binding domains span residues 114–177 (KICA…RRLD), 178–238 (LLCA…LFAA), and 483–546 (DLCY…SSNV). The segment at 586-683 (SQRKPLSVDP…SHGGSITGKS (98 aa)) is disordered. Residues 598–617 (ENVSSTVETAKQAETTASSD) show a composition bias toward polar residues. A compositionally biased stretch (low complexity) spans 642–655 (SNETQSSSNSTETS). Ser690 is modified (phosphoserine). A disordered region spans residues 726–759 (AFRHMPSYTDPSYRKNSGAIYDKNDGTQKGLTPK). Residues 837 to 1038 (VPLEILVERN…LLIENFEKFC (202 aa)) form the Rho-GAP domain. Disordered stretches follow at residues 1078–1097 (LDERNTPKHTASTKRKRQPI) and 1104–1150 (LTSD…IRDS). Basic residues predominate over residues 1088 to 1097 (ASTKRKRQPI). The span at 1104 to 1134 (LTSDVPSGSEVADTNSLSSTTKDEASPNSDA) shows a compositional bias: polar residues.

Its subcellular location is the cell tip. The protein localises to the nucleus. Its function is as follows. GTPase-activating protein for Rho1. Involved in the F-actin patch localization, cell morphogenesis, regulation of septation, and cell wall synthesis. The polypeptide is Rho-type GTPase-activating protein 1 (rga1) (Schizosaccharomyces pombe (strain 972 / ATCC 24843) (Fission yeast)).